A 210-amino-acid polypeptide reads, in one-letter code: Glycerol-3-phosphate acyltransferase (210 aa).

Helical transmembrane passes span 1–21 (MLLSVVAIALLAYLLGSFPAG), 53–73 (GPALVVFITDILKGVLAVVAA), 87–107 (IAWLAAFAAIIAVVGHSLPVW), 122–142 (VLLALSPVVGLSGFGAFLLLL), and 147–167 (IVSLGSIAGAITVIVLMLILP).

It belongs to the PlsY family. As to quaternary structure, probably interacts with PlsX.

Its subcellular location is the cell inner membrane. It carries out the reaction an acyl phosphate + sn-glycerol 3-phosphate = a 1-acyl-sn-glycero-3-phosphate + phosphate. Its pathway is lipid metabolism; phospholipid metabolism. In terms of biological role, catalyzes the transfer of an acyl group from acyl-phosphate (acyl-PO(4)) to glycerol-3-phosphate (G3P) to form lysophosphatidic acid (LPA). This enzyme utilizes acyl-phosphate as fatty acyl donor, but not acyl-CoA or acyl-ACP. This chain is Glycerol-3-phosphate acyltransferase, found in Synechococcus elongatus (strain ATCC 33912 / PCC 7942 / FACHB-805) (Anacystis nidulans R2).